Reading from the N-terminus, the 546-residue chain is MAAKDVKFSRDARERILRGVDILADAVKVTLGPKGRNVVLDKAFGAPRITKDGVSVAKEIELKDKFENMGAQMLREVASKTNDLAGDGTTTATVLAQAIVREGMKSVAAGMNPMDLKRGIDLAATKVVESLRSRSKPVSDFNEVAQVGIISANGDEEVGRRIAEAMEKVGKEGVITVEEAKGFDFELDVVEGMQFDRGYLSPYFITNPEKMVAELADPYILIYEKKLSNLQSILPILESVVQSGRPLLIIAEDIEGEALATLVVNKLRGGLKVAAVKAPGFGDRRKAMLEDIAILTKGELISEDLGIKLENVTLNMLGSAKRVSITKENTTIVDGAGDQSTIKDRVEAIRSQIEATTSDYDREKLQERVAKLAGGVAVIKVGGATEVEVKERKDRVDDALHATRAAVQEGIVPGGGTALLYATKTLEGLNGVNEDQQRGIDIVRRALQAPVRQIAQNAGFDGAVVAGKLIDGNDDKIGFNAQTEKYEDLAATGVIDPTKVVRTALQDAASVAGLLITTEAAVGDLPEDKPAPAMPGGMGGMGGMDF.

Residues 30–33 (TLGP), Lys-51, 87–91 (DGTTT), Gly-415, and Asp-496 each bind ATP. Residues 526–546 (PEDKPAPAMPGGMGGMGGMDF) form a disordered region. A compositionally biased stretch (gly residues) spans 536–546 (GGMGGMGGMDF).

This sequence belongs to the chaperonin (HSP60) family. As to quaternary structure, forms a cylinder of 14 subunits composed of two heptameric rings stacked back-to-back. Interacts with the co-chaperonin GroES.

It is found in the cytoplasm. The enzyme catalyses ATP + H2O + a folded polypeptide = ADP + phosphate + an unfolded polypeptide.. In terms of biological role, together with its co-chaperonin GroES, plays an essential role in assisting protein folding. The GroEL-GroES system forms a nano-cage that allows encapsulation of the non-native substrate proteins and provides a physical environment optimized to promote and accelerate protein folding. The sequence is that of Chaperonin GroEL from Zymomonas mobilis subsp. mobilis (strain ATCC 31821 / ZM4 / CP4).